Consider the following 547-residue polypeptide: Chaperonin GroEL (547 aa).

Residues 30–33 (TLGP), Lys-51, 87–91 (DGTTT), Gly-415, and Asp-496 contribute to the ATP site.

Belongs to the chaperonin (HSP60) family. Forms a cylinder of 14 subunits composed of two heptameric rings stacked back-to-back. Interacts with the co-chaperonin GroES.

It is found in the cytoplasm. It catalyses the reaction ATP + H2O + a folded polypeptide = ADP + phosphate + an unfolded polypeptide.. Its function is as follows. Together with its co-chaperonin GroES, plays an essential role in assisting protein folding. The GroEL-GroES system forms a nano-cage that allows encapsulation of the non-native substrate proteins and provides a physical environment optimized to promote and accelerate protein folding. The protein is Chaperonin GroEL of Actinobacillus pleuropneumoniae serotype 5b (strain L20).